The primary structure comprises 267 residues: MTLFHLILVAAIQGLTEFLPVSSSGHLVLLPALTGQPDQGLAIDVAVHVGSLLAVILYFWSDVRIAATGSLRLARGKVDTQGAFLALCLIIATIPVMIAGLIIKLTGLDEMMRSVAVIGWTMLGFGLVLYWADRTGASTRTASGWTLKDAFLMGLAQILSLIPGTSRSGITITAARRLGYEREGAAKLAMLMSIPTIIASGAVLGADVIGEADWQMARDGALAAALAFVSALLALALMMRLLKSVSFTPYVVYRVILGLILLVYAYS.

The next 8 helical transmembrane spans lie at 1-21, 40-60, 83-103, 111-131, 144-164, 189-209, 219-239, and 245-265; these read MTLF…FLPV, GLAI…LYFW, AFLA…GLII, MMRS…VLYW, GWTL…LIPG, AMLM…ADVI, DGAL…ALMM, and VSFT…LVYA.

It belongs to the UppP family.

The protein resides in the cell inner membrane. It catalyses the reaction di-trans,octa-cis-undecaprenyl diphosphate + H2O = di-trans,octa-cis-undecaprenyl phosphate + phosphate + H(+). Its function is as follows. Catalyzes the dephosphorylation of undecaprenyl diphosphate (UPP). Confers resistance to bacitracin. The protein is Undecaprenyl-diphosphatase of Roseobacter denitrificans (strain ATCC 33942 / OCh 114) (Erythrobacter sp. (strain OCh 114)).